The sequence spans 391 residues: Pectin acetylesterase 7 (391 aa).

The signal sequence occupies residues 1 to 23 (MGRLKQCWSSLLVLAVLVIGTGA). Catalysis depends on charge relay system residues Ser171, Asp267, and His334.

It belongs to the pectinacetylesterase family.

It localises to the secreted. Its subcellular location is the cell wall. Its function is as follows. Hydrolyzes acetyl esters in homogalacturonan regions of pectin. In type I primary cell wall, galacturonic acid residues of pectin can be acetylated at the O-2 and O-3 positions. Decreasing the degree of acetylation of pectin gels in vitro alters their physical properties. The protein is Pectin acetylesterase 7 of Arabidopsis thaliana (Mouse-ear cress).